We begin with the raw amino-acid sequence, 393 residues long: Phosphopentomutase (393 aa).

D13, D286, H291, D327, H328, and H339 together coordinate Mn(2+).

It belongs to the phosphopentomutase family. Requires Mn(2+) as cofactor.

It is found in the cytoplasm. The enzyme catalyses 2-deoxy-alpha-D-ribose 1-phosphate = 2-deoxy-D-ribose 5-phosphate. It carries out the reaction alpha-D-ribose 1-phosphate = D-ribose 5-phosphate. Its pathway is carbohydrate degradation; 2-deoxy-D-ribose 1-phosphate degradation; D-glyceraldehyde 3-phosphate and acetaldehyde from 2-deoxy-alpha-D-ribose 1-phosphate: step 1/2. Functionally, isomerase that catalyzes the conversion of deoxy-ribose 1-phosphate (dRib-1-P) and ribose 1-phosphate (Rib-1-P) to deoxy-ribose 5-phosphate (dRib-5-P) and ribose 5-phosphate (Rib-5-P), respectively. This Symbiobacterium thermophilum (strain DSM 24528 / JCM 14929 / IAM 14863 / T) protein is Phosphopentomutase.